The chain runs to 385 residues: 8-amino-7-oxononanoate synthase (385 aa).

Position 21 (Arg21) interacts with substrate. Residue 108 to 109 participates in pyridoxal 5'-phosphate binding; that stretch reads GF. His133 is a substrate binding site. 3 residues coordinate pyridoxal 5'-phosphate: Ser179, His207, and Thr233. Lys236 is modified (N6-(pyridoxal phosphate)lysine). Thr352 provides a ligand contact to substrate.

The protein belongs to the class-II pyridoxal-phosphate-dependent aminotransferase family. BioF subfamily. In terms of assembly, homodimer. Pyridoxal 5'-phosphate is required as a cofactor.

The enzyme catalyses 6-carboxyhexanoyl-[ACP] + L-alanine + H(+) = (8S)-8-amino-7-oxononanoate + holo-[ACP] + CO2. It participates in cofactor biosynthesis; biotin biosynthesis. Functionally, catalyzes the decarboxylative condensation of pimeloyl-[acyl-carrier protein] and L-alanine to produce 8-amino-7-oxononanoate (AON), [acyl-carrier protein], and carbon dioxide. In Salmonella agona (strain SL483), this protein is 8-amino-7-oxononanoate synthase.